The sequence spans 221 residues: MMAQRNSGAPDNAGGSNDGREGGRGRRDNRDDRRGGRDNAEKSNYLERVVTINRVSKVVKGGRRFSFTALVIVGDGHGLVGVGYGKAKEVPAAIAKGVDEARKNFFRVPLIGGTITHPVQGEDSAGVVMLRPASAGTGVIAGGAARAVLECAGVHDILAKSLGSDNAINVVHATVAALKQLQRPEEVAARRGLPIEDVAPAGMLRARAEFAAAAAQGGSHG.

The tract at residues 1 to 40 (MMAQRNSGAPDNAGGSNDGREGGRGRRDNRDDRRGGRDNA) is disordered. Basic and acidic residues predominate over residues 18 to 40 (DGREGGRGRRDNRDDRRGGRDNA). Positions 45 to 108 (YLERVVTINR…DEARKNFFRV (64 aa)) constitute an S5 DRBM domain.

Belongs to the universal ribosomal protein uS5 family. In terms of assembly, part of the 30S ribosomal subunit. Contacts proteins S4 and S8.

In terms of biological role, with S4 and S12 plays an important role in translational accuracy. Its function is as follows. Located at the back of the 30S subunit body where it stabilizes the conformation of the head with respect to the body. This Mycobacteroides abscessus (strain ATCC 19977 / DSM 44196 / CCUG 20993 / CIP 104536 / JCM 13569 / NCTC 13031 / TMC 1543 / L948) (Mycobacterium abscessus) protein is Small ribosomal subunit protein uS5.